The sequence spans 619 residues: CREB-regulated transcription coactivator 3 (619 aa).

Ser-4 and Ser-62 each carry phosphoserine. Positions 129–148 are disordered; it reads SQHLDESWPRQQPPWKEEKH. Thr-160 is subject to Phosphothreonine. Residue Ser-162 is modified to Phosphoserine; by SIK2. Residue Lys-232 forms a Glycyl lysine isopeptide (Lys-Gly) (interchain with G-Cter in SUMO2) linkage. Phosphoserine occurs at positions 273, 329, 332, 370, 391, 396, and 410. Residues 375–478 form a disordered region; the sequence is STTNLSGPSR…TQQPQAAPSL (104 aa). The tract at residues 380–401 is required for interaction with PPP2CA and PPP2R1A; that stretch reads SGPSRRRQPPVSPLTLSPGPEA. Composition is skewed to polar residues over residues 405-415 and 422-431; these read FSRQLSATSPL and QMVTSEQSPL. Ser-443 carries the phosphoserine modification. Over residues 443-454 the composition is skewed to pro residues; sequence SPPPPYPTPQEL. Low complexity predominate over residues 455–478; it reads PQPLLQQPHAQEPPTQQPQAAPSL.

The protein belongs to the TORC family. In terms of assembly, binding, as a tetramer, through its N-terminal region, with the bZIP domain of CREB1 enhances recruitment of TAF4 to the promoter. 'Arg-314' in the bZIP domain of CREB1 is essential for this interaction. Interacts (when phosphorylated at Ser-162 and Se-273) with 14-3-3 proteins. Interacts with YWHAE. Interacts (when phosphorylated at Ser-391) with phosphatase PP2A catalytic subunit PPP2CA and regulatory subunits PPP2R1A and PPP2R2A. Phosphorylation/dephosphorylation states of Ser-273 are required for regulating transduction of CREB activity. CRTCs/TORCs are inactive when phosphorylated, and active when dephosphorylated at this site. May be phosphorylated at Ser-391 by MAPK3/ERK1 and/or MAPK1/ERK2 or by some cyclin-dependent kinases such as CDK1,CDK2 or CDK5. Following adenylyl cyclase activation, dephosphorylated at Ser-162 and Ser-273 resulting in its dissociation from 14-3-3 proteins probably promoting CRTC3 translocation into the nucleus. As to expression, expressed in brown adipose tissues.

It localises to the nucleus. It is found in the cytoplasm. Transcriptional coactivator for CREB1 which activates transcription through both consensus and variant cAMP response element (CRE) sites. Acts as a coactivator, in the SIK/TORC signaling pathway, being active when dephosphorylated. Acts independently of CREB1 'Ser-133' phosphorylation. Enhances the interaction of CREB1 with TAF4. Regulates the expression of specific CREB-activated genes such as the steroidogenic gene, StAR. Potent coactivator of PPARGC1A and inducer of mitochondrial biogenesis in muscle cells. In Mus musculus (Mouse), this protein is CREB-regulated transcription coactivator 3 (Crtc3).